The chain runs to 433 residues: C4-dicarboxylate transport protein (433 aa).

8 consecutive transmembrane segments (helical) span residues 8–28 (ILYVQVLFAICIGILLGHFWP), 44–64 (LIKMIIGPIIFCTVVTGIAGM), 78–98 (LLYFEVVSTFALLIGLGAAHL), 148–168 (GDILQILLVSLFFGAALAVLG), 188–208 (IVHVITKVAPIGAFGAMAFTI), 222–242 (LIGTFYFTAIVFVLVVLGTIA), 307–327 (IYMTMAVIFIAQATGIELTLM), and 355–375 (AATLAVVPTIPVAGMVLILGI).

Belongs to the dicarboxylate/amino acid:cation symporter (DAACS) (TC 2.A.23) family.

It localises to the cell inner membrane. In terms of biological role, responsible for the transport of dicarboxylates such as succinate, fumarate, and malate from the periplasm across the membrane. The polypeptide is C4-dicarboxylate transport protein (Cupriavidus taiwanensis (strain DSM 17343 / BCRC 17206 / CCUG 44338 / CIP 107171 / LMG 19424 / R1) (Ralstonia taiwanensis (strain LMG 19424))).